Here is a 302-residue protein sequence, read N- to C-terminus: tRNA pseudouridine synthase B (302 aa).

Aspartate 43 (nucleophile) is an active-site residue.

This sequence belongs to the pseudouridine synthase TruB family. Type 1 subfamily.

The enzyme catalyses uridine(55) in tRNA = pseudouridine(55) in tRNA. Responsible for synthesis of pseudouridine from uracil-55 in the psi GC loop of transfer RNAs. This chain is tRNA pseudouridine synthase B, found in Burkholderia pseudomallei (strain 668).